We begin with the raw amino-acid sequence, 319 residues long: ATP-dependent 6-phosphofructokinase (319 aa).

Position 11 (glycine 11) interacts with ATP. 21 to 25 (RAVVR) serves as a coordination point for ADP. ATP contacts are provided by residues 72–73 (RC) and 102–105 (GDGS). Aspartate 103 is a binding site for Mg(2+). A substrate-binding site is contributed by 125–127 (TID). Aspartate 127 (proton acceptor) is an active-site residue. Residue arginine 154 coordinates ADP. Residues arginine 162 and 169 to 171 (MGR) each bind substrate. ADP-binding positions include 185-187 (GAE), arginine 211, and 213-215 (KLH). Substrate is bound by residues glutamate 222, arginine 243, and 249–252 (HIQR).

Belongs to the phosphofructokinase type A (PFKA) family. ATP-dependent PFK group I subfamily. Prokaryotic clade 'B1' sub-subfamily. In terms of assembly, homotetramer. Mg(2+) is required as a cofactor.

It localises to the cytoplasm. The enzyme catalyses beta-D-fructose 6-phosphate + ATP = beta-D-fructose 1,6-bisphosphate + ADP + H(+). It functions in the pathway carbohydrate degradation; glycolysis; D-glyceraldehyde 3-phosphate and glycerone phosphate from D-glucose: step 3/4. With respect to regulation, allosterically activated by ADP and other diphosphonucleosides, and allosterically inhibited by phosphoenolpyruvate. Its function is as follows. Catalyzes the phosphorylation of D-fructose 6-phosphate to fructose 1,6-bisphosphate by ATP, the first committing step of glycolysis. In Alkaliphilus metalliredigens (strain QYMF), this protein is ATP-dependent 6-phosphofructokinase.